The following is a 306-amino-acid chain: Probable cobalamin biosynthesis protein CobD (306 aa).

6 consecutive transmembrane segments (helical) span residues 17–37 (IGEP…IIFF), 54–74 (LFGF…AYEI), 88–108 (ISLY…IEFS), 155–175 (ITDS…PGAF), 207–227 (ILNF…APFY), and 286–306 (SLKA…VLLM).

Belongs to the CobD/CbiB family.

It is found in the cell membrane. It functions in the pathway cofactor biosynthesis; adenosylcobalamin biosynthesis. Its function is as follows. Converts cobyric acid to cobinamide by the addition of aminopropanol on the F carboxylic group. The chain is Probable cobalamin biosynthesis protein CobD from Methanococcus maripaludis (strain C5 / ATCC BAA-1333).